The primary structure comprises 166 residues: Small ribosomal subunit protein eS10 (166 aa).

The disordered stretch occupies residues 95–166 (RRQTRPETAR…FGRGRGQQPQ (72 aa)). The segment covering 98–129 (TRPETARPRPKGLEGERPARLARGEGDRDAYR) has biased composition (basic and acidic residues). Residues 143–154 (AGAGAATEFQFR) show a composition bias toward low complexity. A compositionally biased stretch (gly residues) spans 155–166 (GGFGRGRGQQPQ).

This sequence belongs to the eukaryotic ribosomal protein eS10 family. Component of the small ribosomal subunit.

Its subcellular location is the cytoplasm. It is found in the nucleus. It localises to the nucleolus. In terms of biological role, component of the 40S ribosomal subunit. The ribosome is a large ribonucleoprotein complex responsible for the synthesis of proteins in the cell. The chain is Small ribosomal subunit protein eS10 (rps10) from Ictalurus punctatus (Channel catfish).